Here is a 453-residue protein sequence, read N- to C-terminus: MDITVREHDFKHGFIKSNSTFDGLNIDNSKNKKKIQKGFQILYVLLFCSVMCGLFYYVYENVWLQRDNEMNEILKNSEHLTIGFKVENAHDRILKTIKTHKLKNYIKESVNFLNSGLTKTNYLGSSNDNIELVDFQNIMFYGDAEVGDNQQPFTFILDTGSANLWVPSVKCTTAGCLTKHLYDSSKSRTYEKDGTKVEMNYVSGTVSGFFSKDLVTVGNLSLPYKFIEVIDTNGFEPTYTASTFDGILGLGWKDLSIGSVDPIVVELKNQNKIENALFTFYLPVHDKHTGFLTIGGIEERFYEGPLTYEKLNHDLYWQITLDAHVGNIMLEKANCIVDSGTSAITVPTDFLNKMLQNLDVIKVPFLPFYVTLCNNSKLPTFEFTSENGKYTLEPEYYLQHIEDVGPGLCMLNIIGLDFPVPTFILGDPFMRKYFTVFDYDNQSVGIALAKKNL.

Over 1 to 37 (MDITVREHDFKHGFIKSNSTFDGLNIDNSKNKKKIQK) the chain is Cytoplasmic. The propeptide occupies 1-124 (MDITVREHDF…SGLTKTNYLG (124 aa)). The helical; Signal-anchor for type II membrane protein transmembrane segment at 38-58 (GFQILYVLLFCSVMCGLFYYV) threads the bilayer. The Lumenal portion of the chain corresponds to 59–453 (YENVWLQRDN…VGIALAKKNL (395 aa)). One can recognise a Peptidase A1 domain in the interval 140-447 (FYGDAEVGDN…DYDNQSVGIA (308 aa)). Asp158 is an active-site residue. The cysteines at positions 171 and 176 are disulfide-linked. Residue Asp338 is part of the active site. Cys373 and Cys409 form a disulfide bridge.

Belongs to the peptidase A1 family. As to quaternary structure, component of the hemozoin formation complex (HFC) composed of falcipains FP2A and/or FP2B, plasmepsins PMII, PMIII/HAP and PMIV, heme detoxifying protein HDP and falcilysin FLN. The HFC complex is involved in hemoglobin degradation and detoxification of heme in the food vacuole during the asexual blood stage. Not N-glycosylated. In terms of processing, proteolytically cleaved into the soluble active mature form in the digestive vacuole by cysteine protease falcipains; the process begins at the early ring stage. Proteolysis requires an acidic environment. In absence of falcipains, autoprocessing may serve as an alternate activation system.

The protein resides in the membrane. Its subcellular location is the vacuole lumen. The protein localises to the vacuole membrane. The enzyme catalyses Hydrolysis of the bonds linking certain hydrophobic residues in hemoglobin or globin. Also cleaves small molecules substrates such as Ala-Leu-Glu-Arg-Thr-Phe-|-Phe(NO2)-Ser-Phe-Pro-Thr.. Inhibited by pepstatin A. Inhibited by KNI derived compounds (KNI-10742, 10743, 10395, 10333, and 10343). Functionally, during the asexual blood stage, participates in initial cleavage of native host hemoglobin (Hb) resulting in Hb denaturation. May cleave preferentially denatured hemoglobin that has been cleaved by PMI. Digestion of host Hb is an essential step which provides the parasite with amino acids for protein synthesis, and regulates osmolarity. The protein is Plasmepsin II of Plasmodium falciparum (isolate 3D7).